The following is a 208-amino-acid chain: Uracil phosphoribosyltransferase (208 aa).

5-phospho-alpha-D-ribose 1-diphosphate is bound by residues Arg78, Arg103, and 130–138 (DPMLATGGS). Uracil is bound by residues Ile193 and 198–200 (GDA). Asp199 contacts 5-phospho-alpha-D-ribose 1-diphosphate.

The protein belongs to the UPRTase family. The cofactor is Mg(2+).

It carries out the reaction UMP + diphosphate = 5-phospho-alpha-D-ribose 1-diphosphate + uracil. Its pathway is pyrimidine metabolism; UMP biosynthesis via salvage pathway; UMP from uracil: step 1/1. Allosterically activated by GTP. In terms of biological role, catalyzes the conversion of uracil and 5-phospho-alpha-D-ribose 1-diphosphate (PRPP) to UMP and diphosphate. This Pelobacter propionicus (strain DSM 2379 / NBRC 103807 / OttBd1) protein is Uracil phosphoribosyltransferase.